The primary structure comprises 310 residues: MPATDTNSTHTTPLHPEDQHTLPLHHSTTQPHVQTSDKHADKQHRTQMELDAADYAACAQARQHLYGQTQPQLHAYPNANPQESAHFRTENQHQLTNLLHNIGEGAALGYPVPRAEIRRGGGDWADSASDFDADCWCMWGRFGTMGRQPVVTLLLARQRDGLADWNVVRCRGTGFRAHDSEDGVSVWRQHLVFLLGGHGRRVQLERPSAGEAQARGLLPRIRITPISTSPRPKPPQPTTSTASHPHATARPDHTLFPVPSTPSATVHNPRNYAVQLHAETTRTWRWARRGERGAWMPAETFTCPKDKRPW.

Positions 1–12 (MPATDTNSTHTT) are enriched in polar residues. Residues 1–44 (MPATDTNSTHTTPLHPEDQHTLPLHHSTTQPHVQTSDKHADKQH) form a disordered region. The span at 35 to 44 (TSDKHADKQH) shows a compositional bias: basic and acidic residues. The tract at residues 153–159 (LLLARQR) is involved in the interaction with host DDB1. A disordered region spans residues 205 to 252 (ERPSAGEAQARGLLPRIRITPISTSPRPKPPQPTTSTASHPHATARPD). Over residues 238–248 (TTSTASHPHAT) the composition is skewed to low complexity.

The protein belongs to the HHV-5 HKLF1 family. Interacts with host adaptor protein DDB1; this interaction allows RL1 to recruit the cullin4-RING E3 ubiquitin ligase (CRL4) complex and promote SLN11 degradation.

Degrades the host antiviral factor SLFN11 via the cullin4-RING E3 ubiquitin ligase (CRL4) complex. The sequence is that of Protein RL1 (RL1) from Human cytomegalovirus (strain Merlin) (HHV-5).